We begin with the raw amino-acid sequence, 336 residues long: Ornithine carbamoyltransferase, catabolic (336 aa).

Carbamoyl phosphate is bound by residues 62–65 (STRT), Gln-89, Arg-113, and 140–143 (HPTQ). Residues Asn-172, Asp-236, and 240–241 (SM) contribute to the L-ornithine site. Carbamoyl phosphate is bound by residues 277–278 (CL) and Arg-322.

Belongs to the aspartate/ornithine carbamoyltransferase superfamily. OTCase family.

The protein resides in the cytoplasm. The enzyme catalyses carbamoyl phosphate + L-ornithine = L-citrulline + phosphate + H(+). The protein operates within amino-acid degradation; L-arginine degradation via ADI pathway; carbamoyl phosphate from L-arginine: step 2/2. Its function is as follows. Reversibly catalyzes the transfer of the carbamoyl group from carbamoyl phosphate (CP) to the N(epsilon) atom of ornithine (ORN) to produce L-citrulline. This Staphylococcus aureus (strain MRSA252) protein is Ornithine carbamoyltransferase, catabolic.